The sequence spans 466 residues: 3-isopropylmalate dehydratase large subunit (466 aa).

Cys-347, Cys-407, and Cys-410 together coordinate [4Fe-4S] cluster.

Belongs to the aconitase/IPM isomerase family. LeuC type 1 subfamily. In terms of assembly, heterodimer of LeuC and LeuD. [4Fe-4S] cluster is required as a cofactor.

It carries out the reaction (2R,3S)-3-isopropylmalate = (2S)-2-isopropylmalate. It participates in amino-acid biosynthesis; L-leucine biosynthesis; L-leucine from 3-methyl-2-oxobutanoate: step 2/4. Catalyzes the isomerization between 2-isopropylmalate and 3-isopropylmalate, via the formation of 2-isopropylmaleate. The protein is 3-isopropylmalate dehydratase large subunit of Pectobacterium carotovorum subsp. carotovorum (strain PC1).